Consider the following 400-residue polypeptide: Phosphoglycerate kinase (400 aa).

Residues 21–23, Arg-36, 59–62, Arg-118, and Arg-151 contribute to the substrate site; these read DFN and HLGR. ATP is bound by residues Lys-201, Gly-293, Glu-324, and 353–356; that span reads GGDS.

Belongs to the phosphoglycerate kinase family. As to quaternary structure, monomer.

Its subcellular location is the cytoplasm. It carries out the reaction (2R)-3-phosphoglycerate + ATP = (2R)-3-phospho-glyceroyl phosphate + ADP. It functions in the pathway carbohydrate degradation; glycolysis; pyruvate from D-glyceraldehyde 3-phosphate: step 2/5. This is Phosphoglycerate kinase from Fervidobacterium nodosum (strain ATCC 35602 / DSM 5306 / Rt17-B1).